The following is a 270-amino-acid chain: NADPH-dependent 7-cyano-7-deazaguanine reductase (270 aa).

79-81 (IES) provides a ligand contact to substrate. 81 to 82 (SK) is an NADPH binding site. Cys-177 serves as the catalytic Thioimide intermediate. Asp-184 functions as the Proton donor in the catalytic mechanism. A substrate-binding site is contributed by 216-217 (HE). 245–246 (RG) contributes to the NADPH binding site.

The protein belongs to the GTP cyclohydrolase I family. QueF type 2 subfamily. As to quaternary structure, homodimer.

The protein localises to the cytoplasm. The enzyme catalyses 7-aminomethyl-7-carbaguanine + 2 NADP(+) = 7-cyano-7-deazaguanine + 2 NADPH + 3 H(+). The protein operates within tRNA modification; tRNA-queuosine biosynthesis. Functionally, catalyzes the NADPH-dependent reduction of 7-cyano-7-deazaguanine (preQ0) to 7-aminomethyl-7-deazaguanine (preQ1). This is NADPH-dependent 7-cyano-7-deazaguanine reductase from Acinetobacter baumannii (strain SDF).